The sequence spans 610 residues: UvrABC system protein C (610 aa).

In terms of domain architecture, GIY-YIG spans 16–94; it reads SQPGVYRMYD…IKLYQPRYNV (79 aa). The UVR domain occupies 204 to 239; it reads DQVLTQLIARMEKASQNLEFEEAARIRDQIQAVRRV.

Belongs to the UvrC family. As to quaternary structure, interacts with UvrB in an incision complex.

It is found in the cytoplasm. In terms of biological role, the UvrABC repair system catalyzes the recognition and processing of DNA lesions. UvrC both incises the 5' and 3' sides of the lesion. The N-terminal half is responsible for the 3' incision and the C-terminal half is responsible for the 5' incision. This chain is UvrABC system protein C, found in Escherichia fergusonii (strain ATCC 35469 / DSM 13698 / CCUG 18766 / IAM 14443 / JCM 21226 / LMG 7866 / NBRC 102419 / NCTC 12128 / CDC 0568-73).